A 146-amino-acid polypeptide reads, in one-letter code: D-aminoacyl-tRNA deacylase (146 aa).

A Gly-cisPro motif, important for rejection of L-amino acids motif is present at residues G138–P139.

Belongs to the DTD family. In terms of assembly, homodimer.

The protein localises to the cytoplasm. It catalyses the reaction glycyl-tRNA(Ala) + H2O = tRNA(Ala) + glycine + H(+). It carries out the reaction a D-aminoacyl-tRNA + H2O = a tRNA + a D-alpha-amino acid + H(+). An aminoacyl-tRNA editing enzyme that deacylates mischarged D-aminoacyl-tRNAs. Also deacylates mischarged glycyl-tRNA(Ala), protecting cells against glycine mischarging by AlaRS. Acts via tRNA-based rather than protein-based catalysis; rejects L-amino acids rather than detecting D-amino acids in the active site. By recycling D-aminoacyl-tRNA to D-amino acids and free tRNA molecules, this enzyme counteracts the toxicity associated with the formation of D-aminoacyl-tRNA entities in vivo and helps enforce protein L-homochirality. In Tolumonas auensis (strain DSM 9187 / NBRC 110442 / TA 4), this protein is D-aminoacyl-tRNA deacylase.